The following is a 278-amino-acid chain: Coiled-coil domain-containing protein 106 (278 aa).

Residues 61–99 (AQLHLALERNSWLQKRIEDLEEERDFLRCQLDKFISSAR) are a coiled coil. Residues 102–119 (ADDHCRGKPGPRRAEGDG) show a composition bias toward basic and acidic residues. Positions 102-174 (ADDHCRGKPG…KPKARERQRV (73 aa)) are disordered. Ser-128 is modified (phosphoserine). The span at 131 to 144 (ESAASSLSGASEEG) shows a compositional bias: low complexity. Basic residues predominate over residues 150-166 (KRQKQKGGPGRRRFGKP). Residues 151-164 (RQKQKGGPGRRRFG) carry the Bipartite nuclear localization signal motif.

In terms of assembly, interacts with p53/TP53.

It localises to the nucleus. Functionally, promotes the degradation of p53/TP53 protein and inhibits its transactivity. The protein is Coiled-coil domain-containing protein 106 (CCDC106) of Bos taurus (Bovine).